A 321-amino-acid chain; its full sequence is Aldose reductase C (321 aa).

22–31 is an NADP(+) binding site; that stretch reads GNQIPSIGLG. The Proton donor role is filled by Y62. H124 contributes to the substrate binding site. Position 227 to 281 (227 to 281) interacts with NADP(+); the sequence is SPLGQGKCDFFSNKILKSIAGKYKKSVANVIFKWLNQRGIAAIPKSGNHSRIIEN.

It belongs to the aldo/keto reductase family.

The catalysed reaction is an alditol + NAD(+) = an aldose + NADH + H(+). It catalyses the reaction an alditol + NADP(+) = an aldose + NADPH + H(+). Its function is as follows. Catalyzes the NADPH-dependent reduction of a wide variety of carbonyl-containing compounds to their corresponding alcohols with a broad range of catalytic efficiencies. The chain is Aldose reductase C (alrC) from Dictyostelium discoideum (Social amoeba).